The primary structure comprises 266 residues: MKAVVLTLAVLFLTGSQARHFWQQDEPQSPWDRVKDLATVYVDVVKDGGRDYVAQFEASALGKQLNLKLLDNWDSLSSTVAKLREQIGPVTQEFWDNLEKETEVLRQEMNKDLEEVKKKVQPYLDEFQSKWHEEVELYRQKVAPLGAELREGARQKLQELQEKLSPLGEELRDRARTHVDALRAQLAPYSEQLRERLAARLQALKEGGGATLTEYHAKASEHLSALREKAKPALEDLRQGLMPVLESFRASLLAAVDEATKKLNAQ.

An N-terminal signal peptide occupies residues 1–18; the sequence is MKAVVLTLAVLFLTGSQA. 2 repeat units span residues 67–88 and 89–110. Positions 67–266 are 10 X approximate tandem repeats; sequence LKLLDNWDSL…DEATKKLNAQ (200 aa). A Methionine sulfoxide modification is found at M109. The 3; half-length repeat unit spans residues 111–121; it reads KDLEEVKKKVQ. 5 tandem repeats follow at residues 122–143, 144–165, 166–187, 188–209, and 210–231. A 9; half-length repeat occupies 232 to 242; that stretch reads PALEDLRQGLM. Repeat 10 spans residues 243–266; that stretch reads PVLESFRASLLAAVDEATKKLNAQ.

Belongs to the apolipoprotein A1/A4/E family. As to quaternary structure, homodimer. Interacts with APOA1BP and CLU. Component of a sperm activating protein complex (SPAP), consisting of APOA1, an immunoglobulin heavy chain, an immunoglobulin light chain and albumin. Interacts with NDRG1. Interacts with SCGB3A2. Interacts with NAXE and YJEFN3. Glycosylated. In terms of processing, palmitoylated. Post-translationally, phosphorylation sites are present in the extracellular medium.

It localises to the secreted. Participates in the reverse transport of cholesterol from tissues to the liver for excretion by promoting cholesterol efflux from tissues and by acting as a cofactor for the lecithin cholesterol acyltransferase (LCAT). As part of the SPAP complex, activates spermatozoa motility. In Phoca vitulina (Harbor seal), this protein is Apolipoprotein A-I (APOA1).